The sequence spans 134 residues: Small ribosomal subunit protein uS11 (134 aa).

It belongs to the universal ribosomal protein uS11 family. As to quaternary structure, part of the 30S ribosomal subunit. Interacts with proteins S7 and S18. Binds to IF-3.

In terms of biological role, located on the platform of the 30S subunit, it bridges several disparate RNA helices of the 16S rRNA. Forms part of the Shine-Dalgarno cleft in the 70S ribosome. This chain is Small ribosomal subunit protein uS11, found in Parafrankia sp. (strain EAN1pec).